The sequence spans 365 residues: Transcription factor MYB93 (365 aa).

2 HTH myb-type domains span residues 9-61 (ENGL…TNYL) and 62-116 (RPDI…KKKL). 2 DNA-binding regions (H-T-H motif) span residues 37 to 61 (WRALPKLADLNRCGKSCRLRWTNYL) and 89 to 112 (WSAIATHLQGRTDNEIKNFWNTHL).

In terms of assembly, interacts with FBX5.

It is found in the nucleus. The protein resides in the cytoplasm. In terms of biological role, transcription factor that acts as a negative regulator of lateral root (LR) development. Required for normal auxin responses during LR development. May be part of a negative feedback loop stimulated specifically in the endodermis upon LR initiation to ensure that LRs are formed only in the correct place. The sequence is that of Transcription factor MYB93 from Arabidopsis thaliana (Mouse-ear cress).